A 582-amino-acid chain; its full sequence is 2-succinyl-5-enolpyruvyl-6-hydroxy-3-cyclohexene-1-carboxylate synthase (582 aa).

This sequence belongs to the TPP enzyme family. MenD subfamily. In terms of assembly, homodimer. Mg(2+) is required as a cofactor. Requires Mn(2+) as cofactor. The cofactor is thiamine diphosphate.

The catalysed reaction is isochorismate + 2-oxoglutarate + H(+) = 5-enolpyruvoyl-6-hydroxy-2-succinyl-cyclohex-3-ene-1-carboxylate + CO2. It participates in quinol/quinone metabolism; 1,4-dihydroxy-2-naphthoate biosynthesis; 1,4-dihydroxy-2-naphthoate from chorismate: step 2/7. Its pathway is cofactor biosynthesis; phylloquinone biosynthesis. In terms of biological role, catalyzes the thiamine diphosphate-dependent decarboxylation of 2-oxoglutarate and the subsequent addition of the resulting succinic semialdehyde-thiamine pyrophosphate anion to isochorismate to yield 2-succinyl-5-enolpyruvyl-6-hydroxy-3-cyclohexene-1-carboxylate (SEPHCHC). The protein is 2-succinyl-5-enolpyruvyl-6-hydroxy-3-cyclohexene-1-carboxylate synthase of Synechococcus elongatus (strain ATCC 33912 / PCC 7942 / FACHB-805) (Anacystis nidulans R2).